Reading from the N-terminus, the 138-residue chain is Phospholipase A2 homolog mojave toxin acidic chain (138 aa).

A signal peptide spans 1–40; sequence MRALWIVAVLLVGVEGSLVEFETLIMKIAGRSGISYYSSY. Disulfide bonds link cysteine 42–cysteine 131, cysteine 44–cysteine 60, cysteine 59–cysteine 111, cysteine 65–cysteine 138, cysteine 66–cysteine 104, cysteine 73–cysteine 97, and cysteine 91–cysteine 102. A propeptide spanning residues 81–83 is cleaved from the precursor; the sequence is TYR. The residue at position 84 (glutamine 84) is a Pyrrolidone carboxylic acid. Positions 120–126 are excised as a propeptide; sequence DYKYLRF.

This sequence belongs to the phospholipase A2 family. Group II subfamily. D49 sub-subfamily. In terms of assembly, heterodimer of an acidic and a basic chain. The acidic subunit is non-toxic, without enzymatic activity and comprises 3 peptides that are cross-linked by 5 disulfide bridges. The basic subunit is toxic, has phospholipase A2 activity and is composed of a single chain. The cofactor is Ca(2+). Expressed by the venom gland.

It localises to the secreted. Its function is as follows. Snake venom phospholipase A2 (PLA2) that inhibits neuromuscular transmission by blocking acetylcholine release from the nerve termini. This is Phospholipase A2 homolog mojave toxin acidic chain from Crotalus scutulatus scutulatus (Mojave rattlesnake).